A 187-amino-acid polypeptide reads, in one-letter code: Putative AgrB-like protein 1 (187 aa).

Helical transmembrane passes span 29 to 49 (VVIV…IAGI), 50 to 70 (LGYF…KPFI), 81 to 98 (CFIA…LVTF), 103 to 120 (LFSI…IYNK), and 149 to 169 (ILFL…TITW).

This sequence belongs to the AgrB family.

The protein localises to the cell membrane. May be involved in the proteolytic processing of a quorum sensing system signal molecule precursor. The sequence is that of Putative AgrB-like protein 1 from Clostridium perfringens (strain 13 / Type A).